The following is a 109-amino-acid chain: Cytochrome c6 (109 aa).

Residues 1–25 form the signal peptide; that stretch reads MFKNIIIVVAVTLCALFTNEHVVYS. The heme c site is built by C39, C42, H43, and M83.

Belongs to the cytochrome c family. PetJ subfamily. In terms of assembly, monomer. Post-translationally, binds 1 heme c group covalently per subunit.

It is found in the plastid. It localises to the chloroplast thylakoid lumen. Functions as an electron carrier between membrane-bound cytochrome b6-f and photosystem I in oxygenic photosynthesis. The protein is Cytochrome c6 (petJ) of Cyanidium caldarium (Red alga).